Consider the following 302-residue polypeptide: uncharacterized protein (302 aa).

It belongs to the HAD-like hydrolase superfamily.

This is an uncharacterized protein from Saccharomyces cerevisiae (strain ATCC 204508 / S288c) (Baker's yeast).